The sequence spans 433 residues: MLSLFNRLPWLHRVLITAFSAIIVFAIFFLPNSEDLRKPDAQREVGRHYPVTLDNQLVSTPEEEVIAPPSVMLRWETYQVANGESAALLFQRAGLSSRVLYELTSSNSDINNQLSKLMPKDELKFGFDKDNQLVQLKRTISPYETFVVTRSDSGFTSEFDKKEVTFQLNYAEAKITSNFWNAGVTAGLSANQIIELANMFGWDIDFALDIREGDQFKLLYQEKIVEGSVIGRGNIIAATFINQGSTFTAILDDNTGNYYDQNGRAMKKAFLRSPLDFRRVSSNFNPRRLHPVTGQIKAHRGTDYVAPVGTPIWAAGDGVVEKSSYNQFNGNYVYIRHSNTYITKYLHLQRRLVKTGERVKQGQTIGTLGGTGRVTGPHLHYEFLVNGIHKNPRTVELPQAQSLTGKAKETFIANAKQRMEKLERYSQLLYANQ.

The helical transmembrane segment at 10–30 (WLHRVLITAFSAIIVFAIFFL) threads the bilayer. Positions 299, 303, and 380 each coordinate Zn(2+).

Belongs to the peptidase M23B family. Zn(2+) serves as cofactor.

The protein resides in the cell inner membrane. The protein operates within cell wall degradation; peptidoglycan degradation. With respect to regulation, reduced activity in 0.5 mM EDTA and a complete loss of activity at higher EDTA concentrations. Its function is as follows. Cell wall peptidoglycan (PG) DD-endopeptidase. Hydrolyzes peptide cross-links which covalently connect adjacent PG strands probably to allow insertion of new glycans and thus cell wall expansion. Degrades purified whole PG sacculi in vitro. This is Peptidoglycan DD-endopeptidase ShyC from Vibrio cholerae serotype O1 (strain ATCC 39315 / El Tor Inaba N16961).